Consider the following 177-residue polypeptide: CDP-diacylglycerol--serine O-phosphatidyltransferase (177 aa).

The next 5 helical transmembrane spans lie at 4-24 (IPCMITIGNFICGLLAIHSLL), 28-48 (IHSAVLFIFTGMFLDFFDGMA), 77-97 (MLAYSVALYTLPFIGILCALT), 116-136 (LPTFIGMPIPFAGMCLVILSF), and 140-160 (PILLAIGTCGLSYLMVSKIKF).

The protein belongs to the CDP-alcohol phosphatidyltransferase class-I family.

It localises to the cell membrane. The enzyme catalyses a CDP-1,2-diacyl-sn-glycerol + L-serine = a 1,2-diacyl-sn-glycero-3-phospho-L-serine + CMP + H(+). The protein is CDP-diacylglycerol--serine O-phosphatidyltransferase (pssA) of Bacillus subtilis (strain 168).